The chain runs to 280 residues: Borealin (280 aa).

The segment covering 140-153 has biased composition (basic residues); the sequence is KVAAKKPSTARRTR. Positions 140-187 are disordered; it reads KVAAKKPSTARRTRASVGNVANTSKRTSKRGRATPSASKQAETSLLGY.

The protein belongs to the borealin family. In terms of assembly, component of the CPC at least composed of survivin/birc5, incenp, cdca8/borealin and/or cdca9/dasra-A, and aurkb/aurora-B. Interacts with incenp (via N-terminus).

Its subcellular location is the nucleus. The protein resides in the chromosome. It localises to the centromere. It is found in the cytoplasm. The protein localises to the cytoskeleton. Its subcellular location is the spindle. Functionally, component of the chromosomal passenger complex (CPC), a complex that acts as a key regulator of mitosis. The CPC complex has essential functions at the centromere in ensuring correct chromosome alignment and segregation and is required for chromatin-induced microtubule stabilization and spindle assembly. Contributes to CPC function by facilitating loading of the CPC onto chromosomes. The chain is Borealin (cdca8) from Xenopus laevis (African clawed frog).